A 326-amino-acid polypeptide reads, in one-letter code: N-acetyl-gamma-glutamyl-phosphate reductase (326 aa).

Cys-155 is an active-site residue.

The protein belongs to the NAGSA dehydrogenase family. Type 1 subfamily.

The protein localises to the cytoplasm. It carries out the reaction N-acetyl-L-glutamate 5-semialdehyde + phosphate + NADP(+) = N-acetyl-L-glutamyl 5-phosphate + NADPH + H(+). It participates in amino-acid biosynthesis; L-arginine biosynthesis; N(2)-acetyl-L-ornithine from L-glutamate: step 3/4. In terms of biological role, catalyzes the NADPH-dependent reduction of N-acetyl-5-glutamyl phosphate to yield N-acetyl-L-glutamate 5-semialdehyde. The chain is N-acetyl-gamma-glutamyl-phosphate reductase from Shewanella sediminis (strain HAW-EB3).